The sequence spans 882 residues: Leucine--tRNA ligase (882 aa).

Positions 43–53 (PYPSGRIHMGH) match the 'HIGH' region motif. Positions 634 to 638 (KMSKS) match the 'KMSKS' region motif. Lys-637 is a binding site for ATP.

This sequence belongs to the class-I aminoacyl-tRNA synthetase family.

The protein localises to the cytoplasm. It carries out the reaction tRNA(Leu) + L-leucine + ATP = L-leucyl-tRNA(Leu) + AMP + diphosphate. In Rhodopseudomonas palustris (strain BisB18), this protein is Leucine--tRNA ligase.